Consider the following 153-residue polypeptide: Ribosome maturation factor RimP (153 aa).

The protein belongs to the RimP family.

It is found in the cytoplasm. Its function is as follows. Required for maturation of 30S ribosomal subunits. The sequence is that of Ribosome maturation factor RimP from Coxiella burnetii (strain CbuK_Q154) (Coxiella burnetii (strain Q154)).